The following is a 102-amino-acid chain: ATP-dependent Clp protease adapter protein ClpS (102 aa).

This sequence belongs to the ClpS family. As to quaternary structure, binds to the N-terminal domain of the chaperone ClpA.

Its function is as follows. Involved in the modulation of the specificity of the ClpAP-mediated ATP-dependent protein degradation. This chain is ATP-dependent Clp protease adapter protein ClpS, found in Aromatoleum aromaticum (strain DSM 19018 / LMG 30748 / EbN1) (Azoarcus sp. (strain EbN1)).